A 355-amino-acid chain; its full sequence is UPF0421 protein BALH_2468 (355 aa).

The next 4 membrane-spanning stretches (helical) occupy residues 19-39, 74-94, 109-129, and 131-151; these read IAVFLTVLVCEFFNIPTIFAV, FTFFLGHQALSYALAAMFTIV, TLTAVAMIPITADHYFTAFLI, and LATTSTGIIVSTVVNFFILPP.

The protein belongs to the UPF0421 family.

The protein localises to the cell membrane. The protein is UPF0421 protein BALH_2468 of Bacillus thuringiensis (strain Al Hakam).